The chain runs to 553 residues: Cytokine-like nuclear factor N-PAC (553 aa).

Positions 8–66 constitute a PWWP domain; sequence LGDLVWGKLGRYPPWPGKIVNPPKDLKKPRGKKCFFVKFFGTEDHAWIKVEQLKPYHAH. Composition is skewed to basic and acidic residues over residues 92-145 and 162-182; these read RAKG…EGKK and RAQEQSPRKRGRPPKDEKDLT. The tract at residues 92-188 is disordered; that stretch reads RAKGKDQTSS…KDLTIPESST (97 aa). Serine 130 is subject to Phosphoserine. Lysine 135 participates in a covalent cross-link: Glycyl lysine isopeptide (Lys-Gly) (interchain with G-Cter in SUMO2). At serine 167 the chain carries Phosphoserine. The a.T hook DNA-binding region spans 168–180; it reads PRKRGRPPKDEKD. Glycyl lysine isopeptide (Lys-Gly) (interchain with G-Cter in SUMO2) cross-links involve residues lysine 176, lysine 179, lysine 201, and lysine 211. Residues 214–217 form an interaction with histone H3 region; it reads DPHF. The interval 216-225 is interaction with KDM1B; the sequence is HFHHFLLSQT. Glycyl lysine isopeptide (Lys-Gly) (interchain with G-Cter in SUMO2) cross-links involve residues lysine 227, lysine 237, lysine 240, and lysine 269. A dehydrogenase domain region spans residues 261–553; the sequence is GSITPTDKKI…MSAVYRAYIH (293 aa). An NAD(+)-binding site is contributed by 271–285; sequence GFLGLGLMGSGIVSN. Residue lysine 302 forms a Glycyl lysine isopeptide (Lys-Gly) (interchain with G-Cter in SUMO2) linkage. Threonine 362 and lysine 505 together coordinate NAD(+). Serine 540 is subject to Phosphoserine.

The protein belongs to the HIBADH-related family. NP60 subfamily. As to quaternary structure, homotetramere. Interacts with MAPK14. Interacts with KDM1B at nucleosomes; this interaction stimulates H3K4me1 and H3K4me2 demethylation. Binds to mononucleosomes. Interacts with GATA4; the interaction is required for a synergistic activation of GATA4 target genes transcription.

The protein resides in the nucleus. The protein localises to the chromosome. Its function is as follows. Cytokine-like nuclear factor with chromatin gene reader activity involved in chromatin modification and regulation of gene expression. Acts as a nucleosome-destabilizing factor that is recruited to genes during transcriptional activation. Recognizes and binds histone H3 without a preference for specific epigenetic markers and also binds DNA. Interacts with KDM1B and promotes its histone demethylase activity by facilitating the capture of H3 tails, they form a multifunctional enzyme complex that modifies transcribed chromatin and facilitates Pol II transcription through nucleosomes. Stimulates the acetylation of 'Lys-56' of nucleosomal histone H3 (H3K56ac) by EP300. With GATA4, co-binds a defined set of heart development genes and coregulates their expression during cardiomyocyte differentiation. Regulates p38 MAP kinase activity by mediating stress activation of MAPK14/p38alpha and specifically regulating MAPK14 signaling. Indirectly promotes phosphorylation of MAPK14 and activation of ATF2. The phosphorylation of MAPK14 requires upstream activity of MAP2K4 and MAP2K6. This chain is Cytokine-like nuclear factor N-PAC (GLYR1), found in Pongo abelii (Sumatran orangutan).